The chain runs to 451 residues: Phosphoglucosamine mutase (451 aa).

The Phosphoserine intermediate role is filled by Ser-107. Mg(2+) contacts are provided by Ser-107, Asp-246, Asp-248, and Asp-250. Ser-107 is modified (phosphoserine).

Belongs to the phosphohexose mutase family. It depends on Mg(2+) as a cofactor. Activated by phosphorylation.

It carries out the reaction alpha-D-glucosamine 1-phosphate = D-glucosamine 6-phosphate. In terms of biological role, catalyzes the conversion of glucosamine-6-phosphate to glucosamine-1-phosphate. This is Phosphoglucosamine mutase from Burkholderia ambifaria (strain MC40-6).